Consider the following 490-residue polypeptide: GTPase Der (490 aa).

EngA-type G domains lie at 3–166 (PVVA…MDDV) and 203–376 (IKLA…DSST). GTP is bound by residues 9-16 (GRPNVGKS), 56-60 (DTGGI), 118-121 (NKTD), 209-216 (GRPNVGKS), 256-260 (DTAGV), and 321-324 (NKWD). The KH-like domain occupies 377 to 461 (RRVSTAMLTR…PIRIQFKEGE (85 aa)).

This sequence belongs to the TRAFAC class TrmE-Era-EngA-EngB-Septin-like GTPase superfamily. EngA (Der) GTPase family. Associates with the 50S ribosomal subunit.

Its function is as follows. GTPase that plays an essential role in the late steps of ribosome biogenesis. The polypeptide is GTPase Der (Salmonella typhi).